Consider the following 359-residue polypeptide: CCAAT/enhancer-binding protein alpha (359 aa).

Residues 1–55 are disordered; the sequence is MESADFYEVEPRPPMSSHLQSPPHAPSNAAFGFPRGAGPAPPPAPPAAPEPLGGI. Residues 1-70 are required to repress E2F1:TFDP1-mediated transcription, to inhibit cell cycle and to induce adipocyte differentiation; that stretch reads MESADFYEVE…SIDISAYIDP (70 aa). Residues 29-38 show a composition bias toward low complexity; sequence AAFGFPRGAG. Pro residues predominate over residues 39-49; sequence PAPPPAPPAAP. Residues 54–72 are required for interaction with TRIB1; the sequence is GICEHETSIDISAYIDPAA. Positions 126 to 200 are required to induce adipocyte differentiation; sequence PPGYGCAAAG…HASPAHLAAP (75 aa). Lys-159 is modified (N6-acetyllysine; alternate). Lys-159 is covalently cross-linked (Glycyl lysine isopeptide (Lys-Gly) (interchain with G-Cter in SUMO); alternate). Lys-159 participates in a covalent cross-link: Glycyl lysine isopeptide (Lys-Gly) (interchain with G-Cter in SUMO2); alternate. Disordered stretches follow at residues 176-195 and 213-293; these read LFPY…ASPA and TMHL…RERN. The segment covering 179-191 has biased composition (pro residues); that stretch reads YQPPPPPPPPHPH. Residues 180–194 are required to functionally cooperate with SREBF1 in promoter activation; that stretch reads QPPPPPPPPHPHASP. Ser-193 bears the Phosphoserine mark. The segment covering 220–232 has biased composition (pro residues); that stretch reads HPTPPPTPVPSPH. 2 positions are modified to phosphothreonine; by GSK3: Thr-222 and Thr-226. The residue at position 230 (Ser-230) is a Phosphoserine; by GSK3. The span at 233–255 shows a compositional bias: low complexity; sequence AAPALGAAGLPGPGSALKGLAGA. The interaction with FOXO1 stretch occupies residues 240 to 359; sequence AGLPGPGSAL…SLVKAMGNCA (120 aa). Residues 261-272 are compositionally biased toward gly residues; it reads TGGGGGGSGAGA. Residues 277–293 are compositionally biased toward basic and acidic residues; the sequence is KSVDKNSNEYRVRRERN. The bZIP domain occupies 283–346; it reads SNEYRVRRER…DTLRGIFRQL (64 aa). A DNA-binding region spans residues 286–301; sequence YRVRRERNNIAVRKSR. A basic motif region spans residues 287 to 314; sequence RVRRERNNIAVRKSRDKAKQRNVETQQK. The interval 318–346 is leucine-zipper; it reads LTSDNDRLRKRVEQLSRELDTLRGIFRQL.

Belongs to the bZIP family. C/EBP subfamily. In terms of assembly, binds DNA as a homodimer and as a heterodimer. Can form stable heterodimers with CEBPB, CEBPD, CEBPE and CEBPG. Interacts with PRDM16. Interacts with UBN1. Interacts with ZNF638; this interaction increases transcriptional activation. Interacts with the complex TFDP2:E2F1; the interaction prevents CEBPA binding to target gene promoters and represses its transcriptional activity. Interacts with RB1. Interacts (when phosphorylated at Ser-193) with CDK2, CDK4, E2F4 and SMARCA2. Interacts with SREBPF1. Interacts with FOXO1 (via the Fork-head domain); the interaction increases when FOXO1 is deacetylated. Interacts with SIX1. Interacts (via recognition sequence) with TRIB1. Interacts (via bZIP domain) with OVOL2 (via zinc-finger domains); the interaction inhibits the transcription factor activity of CEBPA and is required to repress adipogenesis. Interacts with TAF1A and UBTF. As to quaternary structure, interacts with TAF1A and UBTF. Interacts with NPM1. Post-translationally, sumoylated, sumoylation blocks the inhibitory effect on cell proliferation by disrupting the interaction with SMARCA2. Phosphorylation at Ser-193 is required for interaction with CDK2, CDK4 and SWI/SNF complex leading to cell cycle inhibition. Dephosphorylated at Ser-193 by protein phosphatase 2A (PP2A) through PI3K/AKT signaling pathway regulation. Phosphorylation at Thr-222 and Thr-226 by GSK3 is constitutive in adipose tissue and lung. In liver, both Thr-222 and Thr-226 are phosphorylated only during feeding but not during fasting. Phosphorylation of the GSK3 consensus sites selectively decreases transactivation activity on IRE-controlled promoters. In terms of processing, ubiquitinated by COP1 upon interaction with TRIB1. Isoform 2 and isoform 3 are expressed in adipose tissue and liver (at protein level).

It is found in the nucleus. It localises to the nucleolus. In terms of biological role, transcription factor that coordinates proliferation arrest and the differentiation of myeloid progenitors, adipocytes, hepatocytes, and cells of the lung and the placenta. Binds directly to the consensus DNA sequence 5'-T[TG]NNGNAA[TG]-3' acting as an activator on distinct target genes. During early embryogenesis, plays essential and redundant functions with CEBPB. Essential for the transition from common myeloid progenitors (CMP) to granulocyte/monocyte progenitors (GMP). Critical for the proper development of the liver and the lung. Necessary for terminal adipocyte differentiation, is required for postnatal maintenance of systemic energy homeostasis and lipid storage. To regulate these different processes at the proper moment and tissue, interplays with other transcription factors and modulators. Down-regulates the expression of genes that maintain cells in an undifferentiated and proliferative state through E2F1 repression, which is critical for its ability to induce adipocyte and granulocyte terminal differentiation. Reciprocally E2F1 blocks adipocyte differentiation by binding to specific promoters and repressing CEBPA binding to its target gene promoters. Proliferation arrest also depends on a functional binding to SWI/SNF complex. In liver, regulates gluconeogenesis and lipogenesis through different mechanisms. To regulate gluconeogenesis, functionally cooperates with FOXO1 binding to IRE-controlled promoters and regulating the expression of target genes such as PCK1 or G6PC1. To modulate lipogenesis, interacts and transcriptionally synergizes with SREBF1 in promoter activation of specific lipogenic target genes such as ACAS2. In adipose tissue, seems to act as FOXO1 coactivator accessing to ADIPOQ promoter through FOXO1 binding sites. Its function is as follows. Can act as dominant-negative. Binds DNA and have transctivation activity, even if much less efficiently than isoform 2. Does not inhibit cell proliferation. Functionally, directly and specifically enhances ribosomal DNA transcription interacting with RNA polymerase I-specific cofactors and inducing histone acetylation. In Mus musculus (Mouse), this protein is CCAAT/enhancer-binding protein alpha.